A 173-amino-acid polypeptide reads, in one-letter code: Large ribosomal RNA subunit accumulation protein YceD (173 aa).

Belongs to the DUF177 domain family.

Functionally, plays a role in synthesis, processing and/or stability of 23S rRNA. In Escherichia coli O157:H7, this protein is Large ribosomal RNA subunit accumulation protein YceD (yceD).